Here is a 141-residue protein sequence, read N- to C-terminus: Nucleoside diphosphate kinase (141 aa).

ATP-binding residues include K11, F59, R87, T93, R104, and N114. H117 acts as the Pros-phosphohistidine intermediate in catalysis.

Belongs to the NDK family. Homotetramer. Mg(2+) serves as cofactor.

It localises to the cytoplasm. It carries out the reaction a 2'-deoxyribonucleoside 5'-diphosphate + ATP = a 2'-deoxyribonucleoside 5'-triphosphate + ADP. The catalysed reaction is a ribonucleoside 5'-diphosphate + ATP = a ribonucleoside 5'-triphosphate + ADP. Functionally, major role in the synthesis of nucleoside triphosphates other than ATP. The ATP gamma phosphate is transferred to the NDP beta phosphate via a ping-pong mechanism, using a phosphorylated active-site intermediate. This Teredinibacter turnerae (strain ATCC 39867 / T7901) protein is Nucleoside diphosphate kinase.